The primary structure comprises 167 residues: Putative lipoprotein YteS (167 aa).

The N-terminal stretch at 1–20 (MTKRIRTALCVIVSVLFLAS) is a signal peptide. Cys21 carries N-palmitoyl cysteine lipidation. Cys21 carries the S-diacylglycerol cysteine lipid modification.

The protein localises to the cell membrane. Its function is as follows. May play a role in the degradation of type I rhamnogalacturonan derived from plant cell walls. The polypeptide is Putative lipoprotein YteS (yteS) (Bacillus subtilis (strain 168)).